A 154-amino-acid chain; its full sequence is Ribosome maturation factor RimP (154 aa).

Belongs to the RimP family.

It is found in the cytoplasm. In terms of biological role, required for maturation of 30S ribosomal subunits. The protein is Ribosome maturation factor RimP of Clostridium perfringens (strain ATCC 13124 / DSM 756 / JCM 1290 / NCIMB 6125 / NCTC 8237 / Type A).